The sequence spans 413 residues: Variant surface glycoprotein YnAT 1.3 (413 aa).

Residues 1–22 form the signal peptide; sequence MLDNSRARSIVHLLILLKAHVI. Residues N91, N361, and N379 are each glycosylated (N-linked (GlcNAc...) asparagine). N379 carries GPI-anchor amidated asparagine lipidation. A propeptide spans 380-413 (removed in mature form); that stretch reads SSNPTSRQNSVVQEPTTVSAAAITPLILPWTLLI.

It localises to the cell membrane. VSG forms a coat on the surface of the parasite. The trypanosome evades the immune response of the host by expressing a series of antigenically distinct VSGs from an estimated 1000 VSG genes. This is Variant surface glycoprotein YnAT 1.3 from Trypanosoma congolense.